A 185-amino-acid chain; its full sequence is uncharacterized protein (185 aa).

A signal peptide spans 1 to 29 (MKLFSRTSLVALGTAAAITLSGVTAPAFA). Residues 41–66 (KTAEDNTPEAPGASTPLKLEQPGTIT) are disordered.

Glycosylated; by Pmt.

It localises to the secreted. This is an uncharacterized protein from Corynebacterium glutamicum (strain ATCC 13032 / DSM 20300 / JCM 1318 / BCRC 11384 / CCUG 27702 / LMG 3730 / NBRC 12168 / NCIMB 10025 / NRRL B-2784 / 534).